We begin with the raw amino-acid sequence, 311 residues long: Ribonuclease 3 (311 aa).

One can recognise an RNase III domain in the interval Tyr-20–Gly-145. Glu-62 contacts Mg(2+). The active site involves Asp-66. The Mg(2+) site is built by Asn-131 and Glu-134. Glu-134 is an active-site residue. In terms of domain architecture, DRBM spans Asn-173–Asp-242. The tract at residues Asn-250 to Glu-311 is disordered. The span at Val-262–Glu-288 shows a compositional bias: acidic residues.

It belongs to the ribonuclease III family. In terms of assembly, homodimer. The cofactor is Mg(2+).

The protein localises to the cytoplasm. It carries out the reaction Endonucleolytic cleavage to 5'-phosphomonoester.. In terms of biological role, digests double-stranded RNA. Involved in the processing of primary rRNA transcript to yield the immediate precursors to the large and small rRNAs (23S and 16S). Processes some mRNAs, and tRNAs when they are encoded in the rRNA operon. Processes pre-crRNA and tracrRNA of type II CRISPR loci if present in the organism. The protein is Ribonuclease 3 of Bacteroides thetaiotaomicron (strain ATCC 29148 / DSM 2079 / JCM 5827 / CCUG 10774 / NCTC 10582 / VPI-5482 / E50).